Consider the following 49-residue polypeptide: U-theraphotoxin-Lk2a (49 aa).

Disulfide bonds link cysteine 4-cysteine 17, cysteine 8-cysteine 41, cysteine 22-cysteine 24, and cysteine 35-cysteine 46.

The protein belongs to the neurotoxin 12 (Hwtx-2) family. 04 (lasiotoxin) subfamily. In terms of tissue distribution, expressed by the venom gland.

Its subcellular location is the secreted. In terms of biological role, toxin that causes irreversible contractile paralysis into adult Aedes aegypti resulting in 100% mortality after 24 hours. The chain is U-theraphotoxin-Lk2a from Lasiodora klugi (Bahia scarlet tarantula).